A 932-amino-acid polypeptide reads, in one-letter code: Protein translocase subunit SecA (932 aa).

Residues Q87, 105–109 (GEGKT), and D515 each bind ATP. Zn(2+) is bound by residues C916, C918, C927, and H928.

The protein belongs to the SecA family. Monomer and homodimer. Part of the essential Sec protein translocation apparatus which comprises SecA, SecYEG and auxiliary proteins SecDF-YajC and YidC. Zn(2+) serves as cofactor.

The protein resides in the cell inner membrane. It localises to the cytoplasm. It carries out the reaction ATP + H2O + cellular proteinSide 1 = ADP + phosphate + cellular proteinSide 2.. Part of the Sec protein translocase complex. Interacts with the SecYEG preprotein conducting channel. Has a central role in coupling the hydrolysis of ATP to the transfer of proteins into and across the cell membrane, serving both as a receptor for the preprotein-SecB complex and as an ATP-driven molecular motor driving the stepwise translocation of polypeptide chains across the membrane. In Burkholderia orbicola (strain AU 1054), this protein is Protein translocase subunit SecA.